The sequence spans 637 residues: Chaperone protein HtpG (637 aa).

An a; substrate-binding region spans residues 1 to 334 (MQDVVNSEKL…SSDLPLNISR (334 aa)). The b stretch occupies residues 335-558 (ETLQNNKVIE…DGSMDIRMER (224 aa)). The c stretch occupies residues 559 to 637 (FLREQKQLNY…MNNVLVKVYQ (79 aa)).

It belongs to the heat shock protein 90 family. Homodimer.

The protein localises to the cytoplasm. Functionally, molecular chaperone. Has ATPase activity. The protein is Chaperone protein HtpG of Ehrlichia canis (strain Jake).